The sequence spans 210 residues: Leucyl/phenylalanyl-tRNA--protein transferase (210 aa).

This sequence belongs to the L/F-transferase family.

The protein localises to the cytoplasm. It catalyses the reaction N-terminal L-lysyl-[protein] + L-leucyl-tRNA(Leu) = N-terminal L-leucyl-L-lysyl-[protein] + tRNA(Leu) + H(+). The catalysed reaction is N-terminal L-arginyl-[protein] + L-leucyl-tRNA(Leu) = N-terminal L-leucyl-L-arginyl-[protein] + tRNA(Leu) + H(+). The enzyme catalyses L-phenylalanyl-tRNA(Phe) + an N-terminal L-alpha-aminoacyl-[protein] = an N-terminal L-phenylalanyl-L-alpha-aminoacyl-[protein] + tRNA(Phe). Its function is as follows. Functions in the N-end rule pathway of protein degradation where it conjugates Leu, Phe and, less efficiently, Met from aminoacyl-tRNAs to the N-termini of proteins containing an N-terminal arginine or lysine. The sequence is that of Leucyl/phenylalanyl-tRNA--protein transferase from Ruegeria pomeroyi (strain ATCC 700808 / DSM 15171 / DSS-3) (Silicibacter pomeroyi).